Here is a 173-residue protein sequence, read N- to C-terminus: Protein GrpE (173 aa).

Over residues 1 to 28 (MTEEEKTKSEAEEIEQNNKEEEQEKSVE) the composition is skewed to basic and acidic residues. The disordered stretch occupies residues 1-30 (MTEEEKTKSEAEEIEQNNKEEEQEKSVEEL).

It belongs to the GrpE family. As to quaternary structure, homodimer.

Its subcellular location is the cytoplasm. Functionally, participates actively in the response to hyperosmotic and heat shock by preventing the aggregation of stress-denatured proteins, in association with DnaK and GrpE. It is the nucleotide exchange factor for DnaK and may function as a thermosensor. Unfolded proteins bind initially to DnaJ; upon interaction with the DnaJ-bound protein, DnaK hydrolyzes its bound ATP, resulting in the formation of a stable complex. GrpE releases ADP from DnaK; ATP binding to DnaK triggers the release of the substrate protein, thus completing the reaction cycle. Several rounds of ATP-dependent interactions between DnaJ, DnaK and GrpE are required for fully efficient folding. This Methanosphaera stadtmanae (strain ATCC 43021 / DSM 3091 / JCM 11832 / MCB-3) protein is Protein GrpE.